The primary structure comprises 514 residues: Cytochrome P450 94A1 (514 aa).

The chain crosses the membrane as a helical span at residues 7 to 29 (EVLLPYLLPLLLLILPTTIFFLT). Residue Cys458 participates in heme binding.

This sequence belongs to the cytochrome P450 family. It depends on heme as a cofactor.

It is found in the endoplasmic reticulum membrane. Its function is as follows. Catalyzes the omega-hydroxylation of various fatty acids (FA) from 10 to 18 carbon atoms. The substrate specificity is higher for laurate &gt; palmitate &gt; myristate &gt; linolenate &gt; linoleate &gt; oleate &gt; caprate. May play a minor role in cutin synthesis and could be involved in plant defense. The chain is Cytochrome P450 94A1 (CYP94A1) from Vicia sativa (Spring vetch).